A 568-amino-acid polypeptide reads, in one-letter code: 2-succinyl-5-enolpyruvyl-6-hydroxy-3-cyclohexene-1-carboxylate synthase (568 aa).

This sequence belongs to the TPP enzyme family. MenD subfamily. Homodimer. Mg(2+) is required as a cofactor. Requires Mn(2+) as cofactor. The cofactor is thiamine diphosphate.

The catalysed reaction is isochorismate + 2-oxoglutarate + H(+) = 5-enolpyruvoyl-6-hydroxy-2-succinyl-cyclohex-3-ene-1-carboxylate + CO2. Its pathway is quinol/quinone metabolism; 1,4-dihydroxy-2-naphthoate biosynthesis; 1,4-dihydroxy-2-naphthoate from chorismate: step 2/7. It participates in cofactor biosynthesis; phylloquinone biosynthesis. In terms of biological role, catalyzes the thiamine diphosphate-dependent decarboxylation of 2-oxoglutarate and the subsequent addition of the resulting succinic semialdehyde-thiamine pyrophosphate anion to isochorismate to yield 2-succinyl-5-enolpyruvyl-6-hydroxy-3-cyclohexene-1-carboxylate (SEPHCHC). This Synechococcus sp. (strain CC9902) protein is 2-succinyl-5-enolpyruvyl-6-hydroxy-3-cyclohexene-1-carboxylate synthase.